The primary structure comprises 347 residues: NADH-ubiquinone oxidoreductase chain 2 (347 aa).

Helical transmembrane passes span 13-33, 55-75, 96-116, 123-143, 150-170, 178-198, 201-221, 247-267, 277-297, and 325-345; these read IFAG…WVGL, AAIK…MAIL, LMIV…FWVP, PLMS…SIMY, NVSL…WGGL, ILAY…PYNP, TILN…LLNL, TLLS…WLII, ITPT…LRLI, and FLPT…FMLM.

It belongs to the complex I subunit 2 family. Core subunit of respiratory chain NADH dehydrogenase (Complex I) which is composed of 45 different subunits. Interacts with TMEM242.

The protein localises to the mitochondrion inner membrane. The catalysed reaction is a ubiquinone + NADH + 5 H(+)(in) = a ubiquinol + NAD(+) + 4 H(+)(out). Core subunit of the mitochondrial membrane respiratory chain NADH dehydrogenase (Complex I) which catalyzes electron transfer from NADH through the respiratory chain, using ubiquinone as an electron acceptor. Essential for the catalytic activity and assembly of complex I. The polypeptide is NADH-ubiquinone oxidoreductase chain 2 (Gorilla gorilla gorilla (Western lowland gorilla)).